Consider the following 288-residue polypeptide: Rhythmically expressed gene 5 protein (288 aa).

Expressed in head, but not in the body. Expression levels oscillate with the circadian rhythm.

In terms of biological role, involved in the generation of biological rhythms (Potential). In the head, oscillates in abundance with a daily peak during early night, even under constant darkness. Oscillation is dependent on period (per) function. The protein is Rhythmically expressed gene 5 protein (Reg-5) of Drosophila melanogaster (Fruit fly).